Reading from the N-terminus, the 273-residue chain is Flagellin FljN (273 aa).

It belongs to the bacterial flagellin family. In C.crescentus, the flagellar filament is composed of multiple flagellins of 29 kDa; 27 kDa and 25 kDa.

Its subcellular location is the secreted. The protein localises to the bacterial flagellum. Its function is as follows. Flagellin is the subunit protein which polymerizes to form the filaments of bacterial flagella. The chain is Flagellin FljN (fljN) from Caulobacter vibrioides (strain ATCC 19089 / CIP 103742 / CB 15) (Caulobacter crescentus).